A 403-amino-acid chain; its full sequence is Phosphoglycerate kinase (403 aa).

Substrate is bound by residues 21 to 23 (DFN), Arg-36, 59 to 62 (HLGR), Arg-119, and Arg-154. Residues Lys-207, Gly-299, Glu-330, and 357–360 (GGDA) each bind ATP.

This sequence belongs to the phosphoglycerate kinase family. In terms of assembly, monomer.

It localises to the cytoplasm. The enzyme catalyses (2R)-3-phosphoglycerate + ATP = (2R)-3-phospho-glyceroyl phosphate + ADP. The protein operates within carbohydrate degradation; glycolysis; pyruvate from D-glyceraldehyde 3-phosphate: step 2/5. This chain is Phosphoglycerate kinase, found in Chlamydia trachomatis serovar A (strain ATCC VR-571B / DSM 19440 / HAR-13).